A 139-amino-acid polypeptide reads, in one-letter code: Oocyte zinc finger protein XlCOF14 (139 aa).

5 C2H2-type zinc fingers span residues 6–28, 33–55, 61–83, 89–111, and 117–139; these read FICS…SNVH, FPCT…QKIH, HKCT…HLSH, FSCF…QLSH, and FVCS…CHIH.

Belongs to the krueppel C2H2-type zinc-finger protein family.

It localises to the nucleus. In terms of biological role, may be involved in transcriptional regulation. This chain is Oocyte zinc finger protein XlCOF14, found in Xenopus laevis (African clawed frog).